We begin with the raw amino-acid sequence, 240 residues long: UDP-2,3-diacylglucosamine hydrolase (240 aa).

Positions 8, 10, 41, 78, and 113 each coordinate Mn(2+). 78–79 contacts substrate; sequence NR. D121, S159, N163, K166, and H194 together coordinate substrate. 2 residues coordinate Mn(2+): H194 and H196.

Belongs to the LpxH family. It depends on Mn(2+) as a cofactor.

Its subcellular location is the cell inner membrane. The enzyme catalyses UDP-2-N,3-O-bis[(3R)-3-hydroxytetradecanoyl]-alpha-D-glucosamine + H2O = 2-N,3-O-bis[(3R)-3-hydroxytetradecanoyl]-alpha-D-glucosaminyl 1-phosphate + UMP + 2 H(+). Its pathway is glycolipid biosynthesis; lipid IV(A) biosynthesis; lipid IV(A) from (3R)-3-hydroxytetradecanoyl-[acyl-carrier-protein] and UDP-N-acetyl-alpha-D-glucosamine: step 4/6. In terms of biological role, hydrolyzes the pyrophosphate bond of UDP-2,3-diacylglucosamine to yield 2,3-diacylglucosamine 1-phosphate (lipid X) and UMP by catalyzing the attack of water at the alpha-P atom. Involved in the biosynthesis of lipid A, a phosphorylated glycolipid that anchors the lipopolysaccharide to the outer membrane of the cell. This chain is UDP-2,3-diacylglucosamine hydrolase, found in Shewanella baltica (strain OS155 / ATCC BAA-1091).